The chain runs to 500 residues: Glucosylglycerol-phosphate synthase (500 aa).

The protein belongs to the glycosyltransferase 20 family.

It carries out the reaction ADP-alpha-D-glucose + sn-glycerol 3-phosphate = 2-O-(alpha-D-glucopyranosyl)-sn-glycerol 3-phosphate + ADP + H(+). It functions in the pathway glycan metabolism; glucosylglycerol biosynthesis. Its function is as follows. Involved in salt tolerance by producing GG-phosphate from ADP-glucose and glycerol-3-phosphate (G3P), an intermediate in the synthesis of the osmolyte glucosylglycerol (GG). The sequence is that of Glucosylglycerol-phosphate synthase (ggpS) from Picosynechococcus sp. (strain ATCC 27264 / PCC 7002 / PR-6) (Agmenellum quadruplicatum).